The following is a 266-amino-acid chain: Type II iodothyronine deiodinase (266 aa).

The Lumenal segment spans residues 1 to 9; sequence MGLLSVDLL. The helical; Signal-anchor for type III membrane protein transmembrane segment at 10–34 threads the bilayer; that stretch reads ITLQILPVFFSNCLFLALYDSVILL. Topologically, residues 35 to 266 are cytoplasmic; the sequence is KHVALLLSRS…KNFSKRUILD (232 aa). The active site involves Sec-130. 2 non-standard amino acids (selenocysteine) are found at residues Sec-130 and Sec-263.

Belongs to the iodothyronine deiodinase family. Predominantly monomer. Can form homodimers but homodimerization is not essential for enzyme activity. Interacts with USP20 and USP33. Interacts with MARCHF6. Post-translationally, ubiquitinated by MARCHF6, leading to its degradation by the proteasome. Deubiquitinated by USP20 and USP33. As to expression, expressed in mammary gland and in brain.

It localises to the endoplasmic reticulum membrane. It catalyses the reaction 3,3',5-triiodo-L-thyronine + iodide + A + H(+) = L-thyroxine + AH2. The catalysed reaction is 3,3'-diiodo-L-thyronine + iodide + A + H(+) = 3,3',5'-triiodo-L-thyronine + AH2. The enzyme catalyses 3'-iodo-L-thyronine + iodide + A + H(+) = 3',5'-diiodo-L-thyronine + AH2. It carries out the reaction 3,3'-diiodothyronamine + iodide + A + H(+) = 3,3',5'-triiodothyronamine + AH2. It catalyses the reaction 3'-iodothyronamine + iodide + A + H(+) = 3',5'-diiodothyronamine + AH2. Plays a crucial role in the metabolism of thyroid hormones (TH) and has specific roles in TH activation and inactivation by deiodination. Catalyzes the deiodination of L-thyroxine (T4) to 3,5,3'-triiodothyronine (T3) and 3,3',5'-triiodothyronine (rT3) to 3,3'-diiodothyronine (3,3'-T2) via outer-ring deiodination (ORD). Catalyzes the deiodination of 3',5'-diiodothyronine (3',5'-T2) to 3'-monoiodothyronine (3'-T1) via ORD. Catalyzes the phenolic ring deiodinations of 3,3',5'-triiodothyronamine and 3',5'- diiodothyronamine. This Mus musculus (Mouse) protein is Type II iodothyronine deiodinase (Dio2).